Here is a 250-residue protein sequence, read N- to C-terminus: 5'-nucleotidase SurE (250 aa).

Positions 8, 9, 39, and 91 each coordinate a divalent metal cation.

It belongs to the SurE nucleotidase family. A divalent metal cation serves as cofactor.

The protein localises to the cytoplasm. The catalysed reaction is a ribonucleoside 5'-phosphate + H2O = a ribonucleoside + phosphate. Functionally, nucleotidase that shows phosphatase activity on nucleoside 5'-monophosphates. This is 5'-nucleotidase SurE from Shewanella halifaxensis (strain HAW-EB4).